Reading from the N-terminus, the 108-residue chain is Phosphoribosyl-ATP pyrophosphatase (108 aa).

The protein belongs to the PRA-PH family.

The protein resides in the cytoplasm. The enzyme catalyses 1-(5-phospho-beta-D-ribosyl)-ATP + H2O = 1-(5-phospho-beta-D-ribosyl)-5'-AMP + diphosphate + H(+). It participates in amino-acid biosynthesis; L-histidine biosynthesis; L-histidine from 5-phospho-alpha-D-ribose 1-diphosphate: step 2/9. The chain is Phosphoribosyl-ATP pyrophosphatase from Geobacter sulfurreducens (strain ATCC 51573 / DSM 12127 / PCA).